A 122-amino-acid polypeptide reads, in one-letter code: Large ribosomal subunit protein uL14c (122 aa).

This sequence belongs to the universal ribosomal protein uL14 family. Part of the 50S ribosomal subunit.

The protein resides in the plastid. The protein localises to the chloroplast. Functionally, binds to 23S rRNA. The chain is Large ribosomal subunit protein uL14c from Populus trichocarpa (Western balsam poplar).